The chain runs to 421 residues: C2H2 type master regulator of conidiophore development brlA (421 aa).

Positions 228–242 are enriched in polar residues; it reads THSPTTPLRSCSIGT. The segment at 228 to 247 is disordered; it reads THSPTTPLRSCSIGTASGPD. 2 C2H2-type zinc fingers span residues 309-333 and 339-364; these read FKCKEPGCKGRFKRQEHLKRHMKSH and HVCWVPGCERAFSRSDNLNAHYTKTH. The span at 361–370 shows a compositional bias: basic residues; it reads TKTHSKRGGR. The interval 361–421 is disordered; the sequence is TKTHSKRGGR…REYSVDGLDD (61 aa).

It is found in the nucleus. BrlA, abaA and wetA are pivotal regulators of conidiophore development and conidium maturation. They act individually and together to regulate their own expression and that of numerous other sporulation-specific genes. Binds promoters of target genes at brlA response elements (BREs) containing the conserved sequence 5'-(C/A)(A/G)AGGG(G/A)-3'. The chain is C2H2 type master regulator of conidiophore development brlA from Aspergillus parasiticus (strain ATCC 56775 / NRRL 5862 / SRRC 143 / SU-1).